Here is a 329-residue protein sequence, read N- to C-terminus: Porphobilinogen deaminase (329 aa).

Cys-253 is modified (S-(dipyrrolylmethanemethyl)cysteine).

This sequence belongs to the HMBS family. As to quaternary structure, monomer. The cofactor is dipyrromethane.

It catalyses the reaction 4 porphobilinogen + H2O = hydroxymethylbilane + 4 NH4(+). Functionally, tetrapolymerization of the monopyrrole PBG into the hydroxymethylbilane pre-uroporphyrinogen in several discrete steps. This is Porphobilinogen deaminase from Leifsonia xyli subsp. xyli (strain CTCB07).